A 343-amino-acid polypeptide reads, in one-letter code: MGGRMPFNQSFWEEFLMGREGRLPTLPEISHVSKRVVRILGGNPGSMHLQGTNTYLVGTGRSRILIDTAQVKQASFLRLQRAPSQLIHSKKGLPVWISRISSFLRTHNLELSYVLLTHWHGDHTGGVPDLLAHSPSLADKIYKNCPDAGQNPITDGQIFSVNGATVRAVFTPGHSVDHMCFQLEEENALFTGDNVLGHGFSVAQDLGRYMHSLGDMASLGCGIGYPAHGAVIGNLPEKLEEYMKHREGRERMMLSTLTREQAQGEGGRVGETKGGLTLNEIVIAMYGRVPQEVVEKALAPSLLQVLWKLAEDRRVGFKPGDPLKRRWFALDQRKRNRVRGYPS.

Zn(2+) contacts are provided by His118, His120, Asp122, and His123. Asp122 functions as the Proton donor/acceptor in the catalytic mechanism.

This sequence belongs to the metallo-beta-lactamase superfamily. It depends on Zn(2+) as a cofactor.

The protein operates within secondary metabolite biosynthesis. Its function is as follows. Lactamase-like protein; part of the gene cluster that mediates the biosynthesis of neosartoricin B, a prenylated anthracenone that probably exhibits T-cell antiproliferative activity, suggestive of a physiological role as an immunosuppressive agent. The non-reducing polyketide synthase nscA probably synthesizes and cyclizes the decaketide backbone. The hydrolase nscB then mediates the product release through hydrolysis followed by spontaneous decarboxylation. The prenyltransferase nscD catalyzes the addition of the dimethylallyl group to the aromatic C5. The FAD-dependent monooxygenase nscC is then responsible for the stereospecific hydroxylation at C2. Neosartoricin B can be converted into two additional compounds neosartoricins C and D. Neosartoricin C is a spirocyclic compound that is cyclized through the attack of C3 hydroxyl on C14, followed by dehydration. On the other hand, neosartoricin D is a further cyclized compound in which attack of C2 on C14 in neosartoricin C results in the formation of the acetal-containing dioxabicyclo-octanone ring. Both of these compounds are novel and possibly represent related metabolites of the gene cluster. In Arthroderma otae (strain ATCC MYA-4605 / CBS 113480) (Microsporum canis), this protein is Lactamase-like protein nscB.